The primary structure comprises 62 residues: Large ribosomal subunit protein uL15 (62 aa).

The protein belongs to the universal ribosomal protein uL15 family.

The polypeptide is Large ribosomal subunit protein uL15 (RPL28) (Candida albicans (Yeast)).